A 472-amino-acid chain; its full sequence is Ribulose bisphosphate carboxylase large chain (472 aa).

2 residues coordinate substrate: Asn116 and Thr166. The Proton acceptor role is filled by Lys168. Lys170 contributes to the substrate binding site. The Mg(2+) site is built by Lys194, Asp196, and Glu197. N6-carboxylysine is present on Lys194. The active-site Proton acceptor is His287. Residues Arg288, His320, and Ser372 each coordinate substrate.

Belongs to the RuBisCO large chain family. Type I subfamily. As to quaternary structure, heterohexadecamer of 8 large chains and 8 small chains. Requires Mg(2+) as cofactor.

The enzyme catalyses 2 (2R)-3-phosphoglycerate + 2 H(+) = D-ribulose 1,5-bisphosphate + CO2 + H2O. It carries out the reaction D-ribulose 1,5-bisphosphate + O2 = 2-phosphoglycolate + (2R)-3-phosphoglycerate + 2 H(+). RuBisCO catalyzes two reactions: the carboxylation of D-ribulose 1,5-bisphosphate, the primary event in carbon dioxide fixation, as well as the oxidative fragmentation of the pentose substrate. Both reactions occur simultaneously and in competition at the same active site. The sequence is that of Ribulose bisphosphate carboxylase large chain from Nitrobacter vulgaris.